We begin with the raw amino-acid sequence, 163 residues long: Large ribosomal subunit protein uL15 (163 aa).

Gly residues predominate over residues 27 to 37; it reads SGLGKTAGRGQ. The segment at 27-46 is disordered; it reads SGLGKTAGRGQKGQKSRSGV.

It belongs to the universal ribosomal protein uL15 family. In terms of assembly, part of the 50S ribosomal subunit.

Functionally, binds to the 23S rRNA. This Zymomonas mobilis subsp. mobilis (strain ATCC 31821 / ZM4 / CP4) protein is Large ribosomal subunit protein uL15.